A 35-amino-acid polypeptide reads, in one-letter code: Photosystem II reaction center protein T (35 aa).

A helical transmembrane segment spans residues 3–23; the sequence is ALVYTFLLVSTLGIIFFAIFF.

The protein belongs to the PsbT family. PSII is composed of 1 copy each of membrane proteins PsbA, PsbB, PsbC, PsbD, PsbE, PsbF, PsbH, PsbI, PsbJ, PsbK, PsbL, PsbM, PsbT, PsbY, PsbZ, Psb30/Ycf12, at least 3 peripheral proteins of the oxygen-evolving complex and a large number of cofactors. It forms dimeric complexes.

The protein localises to the plastid. It localises to the chloroplast thylakoid membrane. Its function is as follows. Found at the monomer-monomer interface of the photosystem II (PS II) dimer, plays a role in assembly and dimerization of PSII. PSII is a light-driven water plastoquinone oxidoreductase, using light energy to abstract electrons from H(2)O, generating a proton gradient subsequently used for ATP formation. This is Photosystem II reaction center protein T from Schisandra chinensis (Chinese magnolia vine).